The chain runs to 221 residues: Alpha-ketoglutarate-dependent dioxygenase alkB homolog 7, mitochondrial (221 aa).

The transit peptide at 1–23 (MAGSRRLAMRLLSGCAWVRGSDS) directs the protein to the mitochondrion. 2 residues coordinate Fe cation: H121 and D123. Y165 is a 2-oxoglutarate binding site. Fe cation is bound at residue H177. 2-oxoglutarate-binding positions include 197–199 (RIS) and R203.

Belongs to the alkB family. Fe(2+) serves as cofactor. Widely expressed.

It is found in the mitochondrion matrix. Functionally, may function as protein hydroxylase; can catalyze auto-hydroxylation at Leu-110 (in vitro), but this activity may be due to the absence of the true substrate. Required to induce programmed necrosis in response to DNA damage caused by cytotoxic alkylating agents. Acts by triggering the collapse of mitochondrial membrane potential and loss of mitochondrial function that leads to energy depletion and cell death. ALKBH7-mediated necrosis is probably required to prevent the accumulation of cells with DNA damage. Does not display DNA demethylase activity. Involved in fatty acid metabolism. The sequence is that of Alpha-ketoglutarate-dependent dioxygenase alkB homolog 7, mitochondrial (Alkbh7) from Mus musculus (Mouse).